The primary structure comprises 247 residues: Sugar fermentation stimulation protein homolog (247 aa).

This sequence belongs to the SfsA family.

This Oleidesulfovibrio alaskensis (strain ATCC BAA-1058 / DSM 17464 / G20) (Desulfovibrio alaskensis) protein is Sugar fermentation stimulation protein homolog.